The chain runs to 425 residues: Serine--tRNA ligase (425 aa).

Position 229–231 (229–231 (TSE)) interacts with L-serine. ATP-binding positions include 259–261 (RKE) and Val275. Glu282 lines the L-serine pocket. An ATP-binding site is contributed by 349–352 (EVTS). L-serine is bound at residue Thr384.

It belongs to the class-II aminoacyl-tRNA synthetase family. Type-1 seryl-tRNA synthetase subfamily. As to quaternary structure, homodimer. The tRNA molecule binds across the dimer.

Its subcellular location is the cytoplasm. The enzyme catalyses tRNA(Ser) + L-serine + ATP = L-seryl-tRNA(Ser) + AMP + diphosphate + H(+). The catalysed reaction is tRNA(Sec) + L-serine + ATP = L-seryl-tRNA(Sec) + AMP + diphosphate + H(+). It functions in the pathway aminoacyl-tRNA biosynthesis; selenocysteinyl-tRNA(Sec) biosynthesis; L-seryl-tRNA(Sec) from L-serine and tRNA(Sec): step 1/1. Catalyzes the attachment of serine to tRNA(Ser). Is also able to aminoacylate tRNA(Sec) with serine, to form the misacylated tRNA L-seryl-tRNA(Sec), which will be further converted into selenocysteinyl-tRNA(Sec). This chain is Serine--tRNA ligase, found in Borrelia garinii subsp. bavariensis (strain ATCC BAA-2496 / DSM 23469 / PBi) (Borreliella bavariensis).